The chain runs to 381 residues: Gustatory and pheromone receptor 39a, isoform D (381 aa).

The Cytoplasmic portion of the chain corresponds to 1 to 43; the sequence is MKRNAFEELRVQLRTLKWLGVLRFTIDFNKCLVRENASEERSA. The helical transmembrane segment at 44–64 threads the bilayer; the sequence is WLYLIGVVGITCSLIVYSTYF. The Extracellular segment spans residues 65 to 78; sequence PSHFIMGKHNTTGN. N-linked (GlcNAc...) asparagine glycosylation is present at asparagine 74. The helical transmembrane segment at 79–101 threads the bilayer; it reads CYALINIRSCSIVTMLIYTQLYI. The Cytoplasmic portion of the chain corresponds to 102–128; that stretch reads QRFRFVALLQSILRFNQISGSHREEGR. Residues 129-149 form a helical membrane-spanning segment; sequence FAFYYYTHLSLLIICMLNYAY. The Extracellular segment spans residues 150–172; sequence GYWTAGVRLTTIPIYLLQYGFSY. The chain crosses the membrane as a helical span at residues 173-193; that stretch reads LFLGQVVVLFACIQQILLSIL. The Cytoplasmic portion of the chain corresponds to 194–234; that stretch reads KYYNQVVLKNIKSSKESREFYYNFCKYNQVIWLSYTEINHC. A helical transmembrane segment spans residues 235-255; sequence FGLLLLLVTGLILLITPSGPF. The Extracellular portion of the chain corresponds to 256–273; the sequence is YLVSTIFEGRFRQNWQFS. Residues 274-294 form a helical membrane-spanning segment; the sequence is LMSFTAILWSLPWIVLLVLAM. The Cytoplasmic segment spans residues 295–350; sequence GRNDVQKEANKTAKMLTKVPRTGTGLDRMIEKFLLKNLRQKPILTAYGFFALDKST. The helical transmembrane segment at 351 to 371 threads the bilayer; it reads LFKLFTAIFTYMVILVQFKEM. The Extracellular portion of the chain corresponds to 372–381; the sequence is ENSTKSINKF. Residue asparagine 373 is glycosylated (N-linked (GlcNAc...) asparagine).

Belongs to the insect chemoreceptor superfamily. Gustatory receptor (GR) family. Gr21a subfamily. Expressed in the adult labellar chemosensory neurons and adult thorax and abdomen.

Its subcellular location is the cell membrane. Gustatory receptor which mediates acceptance or avoidance behavior, depending on its substrates. Plays a role in sustaining courtship behavior in males, possibly through the reception of a stimulating arrestant pheromone. The polypeptide is Gustatory and pheromone receptor 39a, isoform D (Gr39a) (Drosophila melanogaster (Fruit fly)).